Here is a 125-residue protein sequence, read N- to C-terminus: Glycine cleavage system H protein (125 aa).

The Lipoyl-binding domain maps to 19 to 101 (VAVVGISDYA…EGKGWFMKLK (83 aa)). Lys-60 bears the N6-lipoyllysine mark.

It belongs to the GcvH family. As to quaternary structure, the glycine cleavage system is composed of four proteins: P, T, L and H. (R)-lipoate serves as cofactor.

The glycine cleavage system catalyzes the degradation of glycine. The H protein shuttles the methylamine group of glycine from the P protein to the T protein. This Xanthobacter autotrophicus (strain ATCC BAA-1158 / Py2) protein is Glycine cleavage system H protein.